The sequence spans 358 residues: Nuclear receptor subfamily 1 group I member 3 (358 aa).

A DNA-binding region (nuclear receptor) is located at residues 18 to 93 (PRNCVVCGDR…VGMRKDMILS (76 aa)). The NR C4-type zinc-finger motif lies at 21 to 41 (CVVCGDRATGYHFHALTCEGC). Threonine 48 carries the post-translational modification Phosphothreonine; by PKC. The segment at 57–81 (CPFAGRCEVSKAQRRHCPACRLQKC) adopts an NR C4-type zinc-finger fold. The region spanning 119-358 (QQKELIQTLL…MMPLLGEICS (240 aa)) is the NR LBD domain.

Belongs to the nuclear hormone receptor family. NR1 subfamily. As to quaternary structure, heterodimer of NR1I3 and RXR. Interacts with PSMC4. Interacts with ECT2. Directly interacts with DNAJC7; this complex may also include HSP90. Interacts with CRY1. Interacts with CRY2 in a ligand-dependent manner. In terms of processing, phosphorylated at Thr-48 by PKC, dephosphorylation of Thr-48 is required for nuclear translocation and activation.

The protein resides in the nucleus. The protein localises to the cytoplasm. It is found in the cytoskeleton. In terms of biological role, binds and transactivates the retinoic acid response elements that control expression of the retinoic acid receptor beta 2 and alcohol dehydrogenase 3 genes. Transactivates both the phenobarbital responsive element module of the human CYP2B6 gene and the CYP3A4 xenobiotic response element. The polypeptide is Nuclear receptor subfamily 1 group I member 3 (Nr1i3) (Rattus norvegicus (Rat)).